The sequence spans 120 residues: Small ribosomal subunit protein uS13 (120 aa).

The interval 97-120 is disordered; the sequence is PVRGQRTKTNARTRKGKKKTVGAK.

It belongs to the universal ribosomal protein uS13 family. In terms of assembly, part of the 30S ribosomal subunit. Forms a loose heterodimer with protein S19. Forms two bridges to the 50S subunit in the 70S ribosome.

Its function is as follows. Located at the top of the head of the 30S subunit, it contacts several helices of the 16S rRNA. In the 70S ribosome it contacts the 23S rRNA (bridge B1a) and protein L5 of the 50S subunit (bridge B1b), connecting the 2 subunits; these bridges are implicated in subunit movement. Contacts the tRNAs in the A and P-sites. The polypeptide is Small ribosomal subunit protein uS13 (Nitratiruptor sp. (strain SB155-2)).